Consider the following 366-residue polypeptide: MTPEHLPTEQYEAQLAEKVVRLQSMMAPFSDLVPEVFRSPVSHYRMRAEFRIWHDGDDLYHIIFDQQTKSRIRVDSFPAASELINQLMTAMIAGVRNNPVLRHKLFQIDYLTTLSNQAVVSLLYHKKLDDEWRQQAEVLRDALRAQNLNVHLIGRATKTKIELDQDYIDERLPVAGREMIYRQVENSFTQPNAAMNIQMLEWALDVTKDSKGDLLELYCGNGNFSLALARNFDRVLATEIAKPSVAAAQYNIAANHIDNVQIIRMAAEEFTQAMNGVREFNRLQGIDLKSYQCETIFVDPPRSGLDSETEKMVQAYPRILYISCNPETLCKNLETLSQTHKVERLALFDQFPYTHHMECGVLLTAK.

Glutamine 190, tyrosine 218, asparagine 223, glutamate 239, and aspartate 299 together coordinate S-adenosyl-L-methionine. Cysteine 324 functions as the Nucleophile in the catalytic mechanism. Glutamate 358 (proton acceptor) is an active-site residue.

It belongs to the class I-like SAM-binding methyltransferase superfamily. RNA M5U methyltransferase family. TrmA subfamily.

The enzyme catalyses uridine(54) in tRNA + S-adenosyl-L-methionine = 5-methyluridine(54) in tRNA + S-adenosyl-L-homocysteine + H(+). It carries out the reaction uridine(341) in tmRNA + S-adenosyl-L-methionine = 5-methyluridine(341) in tmRNA + S-adenosyl-L-homocysteine + H(+). In terms of biological role, dual-specificity methyltransferase that catalyzes the formation of 5-methyluridine at position 54 (m5U54) in all tRNAs, and that of position 341 (m5U341) in tmRNA (transfer-mRNA). The polypeptide is tRNA/tmRNA (uracil-C(5))-methyltransferase (Escherichia fergusonii (strain ATCC 35469 / DSM 13698 / CCUG 18766 / IAM 14443 / JCM 21226 / LMG 7866 / NBRC 102419 / NCTC 12128 / CDC 0568-73)).